A 638-amino-acid polypeptide reads, in one-letter code: 1,4-alpha-glucan branching enzyme GlgB (638 aa).

Catalysis depends on Asp-320, which acts as the Nucleophile. The active-site Proton donor is Glu-373.

Belongs to the glycosyl hydrolase 13 family. GlgB subfamily. In terms of assembly, monomer.

The catalysed reaction is Transfers a segment of a (1-&gt;4)-alpha-D-glucan chain to a primary hydroxy group in a similar glucan chain.. It functions in the pathway glycan biosynthesis; glycogen biosynthesis. In terms of biological role, catalyzes the formation of the alpha-1,6-glucosidic linkages in glycogen by scission of a 1,4-alpha-linked oligosaccharide from growing alpha-1,4-glucan chains and the subsequent attachment of the oligosaccharide to the alpha-1,6 position. The protein is 1,4-alpha-glucan branching enzyme GlgB of Oleidesulfovibrio alaskensis (strain ATCC BAA-1058 / DSM 17464 / G20) (Desulfovibrio alaskensis).